Reading from the N-terminus, the 404-residue chain is Probable protein phosphatase 2C 30 (404 aa).

Basic and acidic residues predominate over residues 42-52; that stretch reads AERGAEEETSG. The interval 42-72 is disordered; the sequence is AERGAEEETSGKRRRLDGGGGEASTDEEDRE. Residues 77–399 form the PPM-type phosphatase domain; that stretch reads RYGFTSVCGR…DNVSVVVVNL (323 aa). Residues Asp-111, Gly-112, and Asp-298 each contribute to the Mn(2+) site. The disordered stretch occupies residues 321–369; sequence GRRERNRSSPTSNLSPRQSSSSGDEAPNDGAPSAAAGSESDEESAAEED. Residues 330 to 343 are compositionally biased toward polar residues; that stretch reads PTSNLSPRQSSSSG. Residue Asp-390 participates in Mn(2+) binding.

Belongs to the PP2C family. As to quaternary structure, interacts with PYL5 and SAPK2. Binding to PYL5 is dependent on the presence of abscisic acid (ABA). Interacts with PYL3, PYL5 and PYL9. Binding to PYL5 and PYL9 is dependent on the presence of ABA. Requires Mg(2+) as cofactor. The cofactor is Mn(2+).

It localises to the nucleus. It catalyses the reaction O-phospho-L-seryl-[protein] + H2O = L-seryl-[protein] + phosphate. The catalysed reaction is O-phospho-L-threonyl-[protein] + H2O = L-threonyl-[protein] + phosphate. In terms of biological role, together with ABI5, PYL5 and SAPK2, is part of an abscisic acid (ABA) signaling unit that modulates seed germination and early seedling growth. In Oryza sativa subsp. japonica (Rice), this protein is Probable protein phosphatase 2C 30.